Reading from the N-terminus, the 184-residue chain is MTVEVGADENPDFAHDETDGAGDESDDEDAQGRDPELDLAVQYGDEIGDAQRKSLPKRKVIAEWLEPAIFSDAQFTVRFVGADEGRALNHSYRHKDYATNVLTFAYGEEPDGVTVADLVLCCPVVEKEAREQGKTLVAHYAHLLVHGALHAQGYDHERGEEDAAEMEALEIDILAKLGFPNPYR.

2 stretches are compositionally biased toward acidic residues: residues 1 to 11 (MTVEVGADENP) and 19 to 29 (DGAGDESDDED). The segment at 1–38 (MTVEVGADENPDFAHDETDGAGDESDDEDAQGRDPELD) is disordered. 3 residues coordinate Zn(2+): H146, H150, and H156.

The protein belongs to the endoribonuclease YbeY family. Zn(2+) serves as cofactor.

Its subcellular location is the cytoplasm. Single strand-specific metallo-endoribonuclease involved in late-stage 70S ribosome quality control and in maturation of the 3' terminus of the 16S rRNA. This is Endoribonuclease YbeY from Burkholderia pseudomallei (strain K96243).